Here is a 312-residue protein sequence, read N- to C-terminus: Ribosomal protein L11 methyltransferase (312 aa).

The S-adenosyl-L-methionine site is built by threonine 162, glycine 183, aspartate 205, and asparagine 248.

Belongs to the methyltransferase superfamily. PrmA family.

The protein localises to the cytoplasm. The catalysed reaction is L-lysyl-[protein] + 3 S-adenosyl-L-methionine = N(6),N(6),N(6)-trimethyl-L-lysyl-[protein] + 3 S-adenosyl-L-homocysteine + 3 H(+). In terms of biological role, methylates ribosomal protein L11. This Bacillus cereus (strain B4264) protein is Ribosomal protein L11 methyltransferase.